Reading from the N-terminus, the 154-residue chain is Probable chemoreceptor glutamine deamidase CheD (154 aa).

The protein belongs to the CheD family.

The enzyme catalyses L-glutaminyl-[protein] + H2O = L-glutamyl-[protein] + NH4(+). Probably deamidates glutamine residues to glutamate on methyl-accepting chemotaxis receptors (MCPs), playing an important role in chemotaxis. This Methanococcus maripaludis (strain DSM 14266 / JCM 13030 / NBRC 101832 / S2 / LL) protein is Probable chemoreceptor glutamine deamidase CheD.